Reading from the N-terminus, the 293-residue chain is Fructose-bisphosphate aldolase (293 aa).

D-glyceraldehyde 3-phosphate is bound at residue Ser-50. Asp-85 serves as the catalytic Proton donor. The Zn(2+) site is built by His-86, Asp-106, Glu-136, and His-178. Residue Gly-179 participates in dihydroxyacetone phosphate binding. Residue His-208 participates in Zn(2+) binding. Residues 209 to 211 and 230 to 233 contribute to the dihydroxyacetone phosphate site; these read GGS and NVNT.

This sequence belongs to the class II fructose-bisphosphate aldolase family. It depends on Zn(2+) as a cofactor.

The catalysed reaction is beta-D-fructose 1,6-bisphosphate = D-glyceraldehyde 3-phosphate + dihydroxyacetone phosphate. Its pathway is carbohydrate degradation; glycolysis; D-glyceraldehyde 3-phosphate and glycerone phosphate from D-glucose: step 4/4. Catalyzes the aldol condensation of dihydroxyacetone phosphate (DHAP or glycerone-phosphate) with glyceraldehyde 3-phosphate (G3P) to form fructose 1,6-bisphosphate (FBP) in gluconeogenesis and the reverse reaction in glycolysis. The chain is Fructose-bisphosphate aldolase (fba) from Streptococcus pyogenes serotype M1.